Here is a 150-residue protein sequence, read N- to C-terminus: Propanediol utilization protein PduV (150 aa).

The tract at residues Met1 to Asp42 is targets protein to the BMC. A GTP-binding site is contributed by Gly8–Thr15.

This sequence belongs to the EutP/PduV family. As to quaternary structure, interacts with PduU, probably via the PduU beta-barrel which is predicted by modeling to be on the exterior of the BMC.

Its subcellular location is the bacterial microcompartment. It participates in polyol metabolism; 1,2-propanediol degradation. Its function is as follows. May play a role in the spatial distribution of the bacterial microcompartment (BMC) dedicated to 1,2-PD degradation, perhaps being involved in cytoskeleton dynamics; might bind GTP. This subunit is directly targeted to the BMC. Expression of a cosmid containing the full 21-gene pdu operon in E.coli allows E.coli to grow on 1,2-propanediol (1,2-PD) with the appearance of bacterial microcompartments (BMC) in its cytoplasm. In terms of biological role, the 1,2-PD-specific bacterial microcompartment (BMC) concentrates low levels of 1,2-PD catabolic enzymes, concentrates volatile reaction intermediates thus enhancing pathway flux and keeps the level of toxic, mutagenic propionaldehyde low. This Citrobacter freundii protein is Propanediol utilization protein PduV.